The primary structure comprises 344 residues: Tetraacyldisaccharide 4'-kinase (344 aa).

68-75 (TAGGNGKT) is a binding site for ATP.

Belongs to the LpxK family.

The enzyme catalyses a lipid A disaccharide + ATP = a lipid IVA + ADP + H(+). Its pathway is glycolipid biosynthesis; lipid IV(A) biosynthesis; lipid IV(A) from (3R)-3-hydroxytetradecanoyl-[acyl-carrier-protein] and UDP-N-acetyl-alpha-D-glucosamine: step 6/6. In terms of biological role, transfers the gamma-phosphate of ATP to the 4'-position of a tetraacyldisaccharide 1-phosphate intermediate (termed DS-1-P) to form tetraacyldisaccharide 1,4'-bis-phosphate (lipid IVA). The chain is Tetraacyldisaccharide 4'-kinase from Photobacterium profundum (strain SS9).